Here is a 651-residue protein sequence, read N- to C-terminus: Acetyl-coenzyme A synthetase (651 aa).

CoA contacts are provided by residues 193-196 (RAGR), T313, and N337. ATP is bound by residues 389-391 (GEP), 413-418 (DTWWQT), D502, and R517. Residue S525 coordinates CoA. Residue R528 participates in ATP binding. Residues V539, H541, and V544 each coordinate Mg(2+). R586 is a CoA binding site. K611 carries the post-translational modification N6-acetyllysine.

It belongs to the ATP-dependent AMP-binding enzyme family. The cofactor is Mg(2+). Acetylated. Deacetylation by the SIR2-homolog deacetylase activates the enzyme.

The enzyme catalyses acetate + ATP + CoA = acetyl-CoA + AMP + diphosphate. Its function is as follows. Catalyzes the conversion of acetate into acetyl-CoA (AcCoA), an essential intermediate at the junction of anabolic and catabolic pathways. AcsA undergoes a two-step reaction. In the first half reaction, AcsA combines acetate with ATP to form acetyl-adenylate (AcAMP) intermediate. In the second half reaction, it can then transfer the acetyl group from AcAMP to the sulfhydryl group of CoA, forming the product AcCoA. The polypeptide is Acetyl-coenzyme A synthetase (Shewanella denitrificans (strain OS217 / ATCC BAA-1090 / DSM 15013)).